The following is a 368-amino-acid chain: Glutamine synthetase root isozyme 2 (368 aa).

The region spanning 19–99 (IIAEYIWVGG…VMCDCYEPNG (81 aa)) is the GS beta-grasp domain. The interval 38-66 (RTLSGPVDDPSKLPKWNFDGSSTGQAPGD) is disordered. One can recognise a GS catalytic domain in the interval 106–368 (KRHGAAKIFS…NGDGKGAAAP (263 aa)).

The protein belongs to the glutamine synthetase family. As to quaternary structure, homooctamer. In terms of tissue distribution, found mainly in the vascular tissues of seedling roots.

The protein resides in the cytoplasm. It carries out the reaction L-glutamate + NH4(+) + ATP = L-glutamine + ADP + phosphate + H(+). Its function is as follows. Plays a role in the flow of nitrogen into nitrogenous organic compounds. The polypeptide is Glutamine synthetase root isozyme 2 (GLN2) (Zea mays (Maize)).